The following is a 690-amino-acid chain: Cyclic nucleotide-gated channel alpha-1 (690 aa).

Over 1-163 (MKKVIINTWH…VVIDPSGNTY (163 aa)) the chain is Cytoplasmic. 2 disordered regions span residues 33–76 (GACS…PSQR) and 88–151 (NVNN…EEKK). Positions 40–54 (GDDDDSASMFEESET) are enriched in acidic residues. Over residues 64 to 76 (RSNTHGSGQPSQR) the composition is skewed to polar residues. Basic and acidic residues predominate over residues 111–151 (SKPDDKNENKKDPEKKKKKEKDKDKKKKEEKGKDKKEEEKK). The helical transmembrane segment at 164-185 (YNWLFCITLPVMYNWTMIIARA) threads the bilayer. Residues 186–195 (CFDELQSDYL) are Extracellular-facing. A helical transmembrane segment spans residues 196-215 (EYWLAFDYLSDVVYLLDMFV). Residues 216 to 241 (RTRTGYLEQGLLVKEERKLIDKYKST) are Cytoplasmic-facing. The helical transmembrane segment at 242–251 (FQFKLDVLSV) threads the bilayer. At 252 to 264 (IPTDLLYIKFGWN) the chain is on the extracellular side. The helical transmembrane segment at 265-283 (YPEIRLNRLLRISRMFEFF) threads the bilayer. Residues 284–291 (QRTETRTN) lie on the Cytoplasmic side of the membrane. The chain crosses the membrane as a helical span at residues 292–315 (YPNIFRISNLVMYIIIIIHWNACV). Positions 293–402 (PNIFRISNLV…NIGSMISNMN (110 aa)) are ion conduction pathway. The Extracellular portion of the chain corresponds to 316–342 (YFSISKAIGFGNDTWVYPDVNDPDFGR). N-linked (GlcNAc...) asparagine glycosylation occurs at Asn327. The next 2 helical transmembrane spans lie at 343–373 (LARK…DSEY) and 374–399 (FFVV…SMIS). The selectivity filter stretch occupies residues 360–363 (TIGE). At 400–690 (NMNAARAEFQ…ESGPTDSTQD (291 aa)) the chain is on the cytoplasmic side. A C-linker region spans residues 403–479 (AARAEFQARI…DTLKKVRIFA (77 aa)). The interval 482 to 603 (EAGLLVELVL…EEKGKQILMK (122 aa)) is cyclic nucleotide-binding domain (CNBD). Gly543, Ser546, Arg559, and Thr560 together coordinate 3',5'-cyclic GMP. Residues Arg559 and Thr560 each coordinate 3',5'-cyclic AMP. A coiled-coil region spans residues 621 to 664 (LEEKVTRMESSVDLLQTRFARILAEYESMQQKLKQRLTKVEKFL).

This sequence belongs to the cyclic nucleotide-gated cation channel (TC 1.A.1.5) family. CNGA1 subfamily. Forms a heterotetramer with CNGB1 in a 3:1 ratio. May also form cyclic nucleotide-activated homotetrameric channels, that are efficiently activated by saturating cGMP, but poorly activated by saturating cAMP compared to the heterotetramer with CNGB1. The channel binds Ca(2+)-bound CALM1 via CaM1 and CaM2 regions of the CNGB1 subunit; this interaction modulates the affinity of the channel for cNMPs in response to intracellular Ca(2+) levels. Expressed in the retina, in rod cells (at protein level).

It localises to the cell membrane. It carries out the reaction Ca(2+)(in) = Ca(2+)(out). It catalyses the reaction Na(+)(in) = Na(+)(out). The enzyme catalyses K(+)(in) = K(+)(out). The catalysed reaction is NH4(+)(in) = NH4(+)(out). It carries out the reaction Rb(+)(in) = Rb(+)(out). It catalyses the reaction Li(+)(in) = Li(+)(out). The enzyme catalyses Cs(+)(in) = Cs(+)(out). Pore-forming subunit of the rod cyclic nucleotide-gated channel. Mediates rod photoresponses at dim light converting transient changes in intracellular cGMP levels into electrical signals. In the dark, cGMP levels are high and keep the channel open enabling a steady inward current carried by Na(+) and Ca(2+) ions that leads to membrane depolarization and neurotransmitter release from synaptic terminals. Upon photon absorption cGMP levels decline leading to channel closure and membrane hyperpolarization that ultimately slows neurotransmitter release and signals the presence of light, the end point of the phototransduction cascade. Conducts cGMP- and cAMP-gated ion currents, with permeability for monovalent and divalent cations. The selectivity for Ca(2+) over Na(+) increases with cGMP concentrations, whereas the selectivity among monovalent ions is independent of the cGMP levels. This Bos taurus (Bovine) protein is Cyclic nucleotide-gated channel alpha-1.